A 236-amino-acid chain; its full sequence is MKSLSFLNHEFEAFPSPELALTDPNGLLAIGGDLRPDRLLTAYYHGIFPWFNAEDPILWWSPDPRAIFIPGQVNISTSLRKYLKKQPWRFTINHAFTDVMAGCAQPRRKQAGTWITHEIQMAYRELHHNGHAHSIEVWQGERLIGGLYGLAIGQVFCGESMFHRETNASKAAMAVLQQHLIKMNFKLIDAQVMNPHLESLGAKALKRADFIQLLTQFRDDAVNPAAWIPSEVFLEL.

This sequence belongs to the L/F-transferase family.

It is found in the cytoplasm. It catalyses the reaction N-terminal L-lysyl-[protein] + L-leucyl-tRNA(Leu) = N-terminal L-leucyl-L-lysyl-[protein] + tRNA(Leu) + H(+). The catalysed reaction is N-terminal L-arginyl-[protein] + L-leucyl-tRNA(Leu) = N-terminal L-leucyl-L-arginyl-[protein] + tRNA(Leu) + H(+). It carries out the reaction L-phenylalanyl-tRNA(Phe) + an N-terminal L-alpha-aminoacyl-[protein] = an N-terminal L-phenylalanyl-L-alpha-aminoacyl-[protein] + tRNA(Phe). In terms of biological role, functions in the N-end rule pathway of protein degradation where it conjugates Leu, Phe and, less efficiently, Met from aminoacyl-tRNAs to the N-termini of proteins containing an N-terminal arginine or lysine. The sequence is that of Leucyl/phenylalanyl-tRNA--protein transferase from Shewanella oneidensis (strain ATCC 700550 / JCM 31522 / CIP 106686 / LMG 19005 / NCIMB 14063 / MR-1).